The following is a 404-amino-acid chain: AT-hook motif nuclear-localized protein 6 (404 aa).

The interval 40 to 112 (TTVVTPLPPP…TPISSSIPLS (73 aa)) is disordered. The segment covering 45–55 (PLPPPPAPSSA) has biased composition (pro residues). The segment covering 56–70 (PVPTTVTPGSATAST) has biased composition (low complexity). The Bipartite nuclear localization signal motif lies at 76-84 (KKKRGRPRK). Positions 76 to 88 (KKKRGRPRKYAPD) form a DNA-binding region, a.T hook. Over residues 98–112 (PTLSPTPISSSIPLS) the composition is skewed to low complexity. The region spanning 157-299 (GANFTTHQFT…RVMEAFAPPQ (143 aa)) is the PPC domain. The tract at residues 365-404 (AYHGYGNMNTGTTHKEEHEDEDGGDDDDDSGDTRSQSHSG) is disordered. Positions 382–394 (HEDEDGGDDDDDS) are enriched in acidic residues.

The protein localises to the nucleus. Its function is as follows. Transcription factor that specifically binds AT-rich DNA sequences related to the nuclear matrix attachment regions (MARs). This Arabidopsis thaliana (Mouse-ear cress) protein is AT-hook motif nuclear-localized protein 6.